A 423-amino-acid polypeptide reads, in one-letter code: Histidine--tRNA ligase (423 aa).

Belongs to the class-II aminoacyl-tRNA synthetase family. In terms of assembly, homodimer.

The protein resides in the cytoplasm. It catalyses the reaction tRNA(His) + L-histidine + ATP = L-histidyl-tRNA(His) + AMP + diphosphate + H(+). This chain is Histidine--tRNA ligase, found in Geobacillus sp. (strain WCH70).